A 479-amino-acid polypeptide reads, in one-letter code: Poly(A) polymerase catalytic subunit (479 aa).

Active-site residues include aspartate 202 and aspartate 204. Residues aspartate 202, aspartate 204, and aspartate 253 each contribute to the Ca(2+) site.

Belongs to the poxviridae poly(A) polymerase catalytic subunit family. As to quaternary structure, heterodimer of a large (catalytic) subunit and a small (regulatory) subunit.

The catalysed reaction is RNA(n) + ATP = RNA(n)-3'-adenine ribonucleotide + diphosphate. In terms of biological role, polymerase that creates the 3'-poly(A) tail of mRNA's. This chain is Poly(A) polymerase catalytic subunit (OPG063), found in Homo sapiens (Human).